The primary structure comprises 226 residues: Cobalt transport protein CbiM 2 (226 aa).

The next 6 membrane-spanning stretches (helical) occupy residues 6 to 26 (GFLP…VVAY), 43 to 63 (MLLG…MPSV), 75 to 95 (LGAI…VLLF), 107 to 127 (TLGA…AAVF), 135 to 155 (FPFG…TYVT), and 181 to 201 (VFAL…VVVM).

The protein belongs to the CbiM family. In terms of assembly, forms an energy-coupling factor (ECF) transporter complex composed of an ATP-binding protein (A component, CbiO), a transmembrane protein (T component, CbiQ) and 2 possible substrate-capture proteins (S components, CbiM and CbiN) of unknown stoichimetry.

It is found in the cell inner membrane. The protein operates within cofactor biosynthesis; adenosylcobalamin biosynthesis. Part of the energy-coupling factor (ECF) transporter complex CbiMNOQ involved in cobalt import. The polypeptide is Cobalt transport protein CbiM 2 (Pelobacter propionicus (strain DSM 2379 / NBRC 103807 / OttBd1)).